A 387-amino-acid polypeptide reads, in one-letter code: Succinate--CoA ligase [ADP-forming] subunit beta (387 aa).

The ATP-grasp domain maps to 9-244; the sequence is KEVLRKFGVA…LNEEEPSEIE (236 aa). Residues K46, 53 to 55, E99, C102, and E107 contribute to the ATP site; that span reads GRG. 2 residues coordinate Mg(2+): N199 and D213. Substrate is bound by residues N264 and 321-323; that span reads GIM.

It belongs to the succinate/malate CoA ligase beta subunit family. As to quaternary structure, heterotetramer of two alpha and two beta subunits. The cofactor is Mg(2+).

It carries out the reaction succinate + ATP + CoA = succinyl-CoA + ADP + phosphate. The enzyme catalyses GTP + succinate + CoA = succinyl-CoA + GDP + phosphate. The protein operates within carbohydrate metabolism; tricarboxylic acid cycle; succinate from succinyl-CoA (ligase route): step 1/1. Its function is as follows. Succinyl-CoA synthetase functions in the citric acid cycle (TCA), coupling the hydrolysis of succinyl-CoA to the synthesis of either ATP or GTP and thus represents the only step of substrate-level phosphorylation in the TCA. The beta subunit provides nucleotide specificity of the enzyme and binds the substrate succinate, while the binding sites for coenzyme A and phosphate are found in the alpha subunit. The polypeptide is Succinate--CoA ligase [ADP-forming] subunit beta (Bdellovibrio bacteriovorus (strain ATCC 15356 / DSM 50701 / NCIMB 9529 / HD100)).